The following is a 348-amino-acid chain: Dihydroorotase (348 aa).

Residues His-17 and His-19 each contribute to the Zn(2+) site. Substrate contacts are provided by residues 19–21 and Asn-45; that span reads HLR. Lys-103, His-140, and His-178 together coordinate Zn(2+). Lys-103 carries the post-translational modification N6-carboxylysine. His-140 is a binding site for substrate. A substrate-binding site is contributed by Leu-223. Zn(2+) is bound at residue Asp-251. Asp-251 is an active-site residue. 2 residues coordinate substrate: His-255 and Ala-267.

Belongs to the metallo-dependent hydrolases superfamily. DHOase family. Class II DHOase subfamily. Homodimer. Zn(2+) is required as a cofactor.

It carries out the reaction (S)-dihydroorotate + H2O = N-carbamoyl-L-aspartate + H(+). It functions in the pathway pyrimidine metabolism; UMP biosynthesis via de novo pathway; (S)-dihydroorotate from bicarbonate: step 3/3. Its function is as follows. Catalyzes the reversible cyclization of carbamoyl aspartate to dihydroorotate. The protein is Dihydroorotase of Serratia proteamaculans (strain 568).